Here is a 238-residue protein sequence, read N- to C-terminus: Cysteine-rich venom protein pseudechetoxin (238 aa).

The N-terminal stretch at 1 to 19 (MIAFIVLLSLAAVLQQSSG) is a signal peptide. Residues 20–27 (TADFASES) constitute a propeptide that is removed on maturation. Positions 38–164 (VDKHNALRRS…SSKYLYVCQY (127 aa)) constitute an SCP domain. Residues T51 and S106 each contribute to the Zn(2+) site. Cystine bridges form between C75–C153, C92–C165, C148–C162, C184–C191, C187–C196, C200–C233, C209–C227, and C218–C231. The ShKT domain maps to 200–233 (CKRNNDFSNCKSLAKKSKCQTEWIKKKCPASCFC).

In terms of tissue distribution, expressed by the venom gland.

The protein resides in the secreted. Blocks olfactory (CNGA2) and retinal (CNGA1) cyclic nucleotide-gated (CNG) ion channel currents. Does not inhibit retinal (CNGA3) currents. It forms high-affinity contacts with the pore turret region and most likely inhibits CNG channel current by blocking the external entrance to the transmembrane pore. Is really more potent that Pseudecin. Does not affect neither depolarization- nor caffeine-induced contraction arterial smooth muscle. This Pseudechis australis (Mulga snake) protein is Cysteine-rich venom protein pseudechetoxin.